Consider the following 413-residue polypeptide: Palmitoyltransferase ZDHHC6 (413 aa).

Over 1-24 (MGTFCSVIKFENLQELKRLCHWGP) the chain is Cytoplasmic. Residues 25 to 45 (IIALGVIAICSTMAMIDSVLW) traverse the membrane as a helical segment. At 46–57 (YWPLHTTGGSVN) the chain is on the lumenal side. The chain crosses the membrane as a helical span at residues 58–78 (FIMLINWTVMILYNYFNAMFV). The Cytoplasmic portion of the chain corresponds to 79-143 (GPGFVPLGWK…NCCGYQNHAS (65 aa)). Residues 99–149 (QYCKVCQAYKAPRSHHCRKCNRCVMKMDHHCPWINNCCGYQNHASFTLFLL) form the DHHC domain. C129 serves as the catalytic S-palmitoyl cysteine intermediate. Residues 144–164 (FTLFLLLAPLGCIHAAFIFVM) traverse the membrane as a helical segment. Residues 165 to 205 (TMYTQLYHRLSFGWNTVKIDMSAARRDPLPIVPFGLAAFAT) lie on the Lumenal side of the membrane. The chain crosses the membrane as a helical span at residues 206–226 (TLFALGLALGTTIAVGMLFFI). Topologically, residues 227–413 (QMKIILRNKT…QAPEGEKKNR (187 aa)) are cytoplasmic. The SH3 domain maps to 313–398 (VRSVRYKVIE…PRKCVEKCPC (86 aa)). Residues C328, C329, and C343 are each lipidated (S-palmitoyl cysteine). Residues 410–413 (KKNR) carry the Di-lysine motif motif.

This sequence belongs to the DHHC palmitoyltransferase family. In terms of assembly, homooligomerizes. Interacts with SELENOK. Post-translationally, palmitoylated at 3 different sites by ZDHHC16. The combination of the different palmitoylation events strongly affects the quaternary assembly of ZDHHC6, its localization, stability and function. Palmitoylation at Cys-328 accelerates the turnover of ZDHHC6. Depalmitoylated by LYPLA2.

Its subcellular location is the endoplasmic reticulum membrane. The catalysed reaction is L-cysteinyl-[protein] + hexadecanoyl-CoA = S-hexadecanoyl-L-cysteinyl-[protein] + CoA. The enzyme catalyses L-cysteinyl-[protein] + octadecanoyl-CoA = S-octadecanoyl-L-cysteinyl-[protein] + CoA. Its function is as follows. Endoplasmic reticulum palmitoyl acyltransferase that mediates palmitoylation of proteins such as AMFR, CALX, ITPR1 and TFRC. Palmitoylates calnexin (CALX), which is required for its association with the ribosome-translocon complex and efficient folding of glycosylated proteins. Mediates palmitoylation of AMFR, promoting AMFR distribution to the peripheral endoplasmic reticulum. Together with SELENOK, palmitoylates ITPR1 in immune cells, leading to regulate ITPR1 stability and function. Stearoyltransferase that mediates stearoylation of TFRC to inhibit TFRC-mediated activation of the JNK pathway and mitochondrial fragmentation. The chain is Palmitoyltransferase ZDHHC6 from Homo sapiens (Human).